Reading from the N-terminus, the 294-residue chain is Undecaprenyl-diphosphatase (294 aa).

A run of 9 helical transmembrane segments spans residues 2 to 22 (SMIYITLNIIAYVIDVRSLIL), 27 to 47 (LVFSLILGIVEGLTEFLPISS), 65 to 85 (VIAFTVIIQLGAILSITKIFW), 110 to 130 (LCIRHIFLGTFPGIMLGMIFY), 135 to 155 (LIFELTYIMYGLIIGGIFLLV), 172 to 192 (ITYLQAFLIGCFQCLAFWPGF), 215 to 235 (FSFFLAVPIIFGSAVLTLYHY), 239 to 259 (IGLMDVLLLIAGSATAFFIAL), and 272 to 292 (VSLIPFAIYRFLLAGGIYWGL).

It belongs to the UppP family.

The protein resides in the cell inner membrane. It carries out the reaction di-trans,octa-cis-undecaprenyl diphosphate + H2O = di-trans,octa-cis-undecaprenyl phosphate + phosphate + H(+). Catalyzes the dephosphorylation of undecaprenyl diphosphate (UPP). Confers resistance to bacitracin. The chain is Undecaprenyl-diphosphatase from Blochmanniella pennsylvanica (strain BPEN).